The chain runs to 303 residues: Tyrosine recombinase XerC (303 aa).

One can recognise a Core-binding (CB) domain in the interval 1–85 (MRADLDAFLE…ATRGLYQYLL (85 aa)). Residues 106–285 (KLPRTLDADR…DFQHLASVYD (180 aa)) form the Tyr recombinase domain. Catalysis depends on residues R146, K170, H237, R240, and H263. Residue Y272 is the O-(3'-phospho-DNA)-tyrosine intermediate of the active site.

It belongs to the 'phage' integrase family. XerC subfamily. Forms a cyclic heterotetrameric complex composed of two molecules of XerC and two molecules of XerD.

Its subcellular location is the cytoplasm. In terms of biological role, site-specific tyrosine recombinase, which acts by catalyzing the cutting and rejoining of the recombining DNA molecules. The XerC-XerD complex is essential to convert dimers of the bacterial chromosome into monomers to permit their segregation at cell division. It also contributes to the segregational stability of plasmids. The sequence is that of Tyrosine recombinase XerC from Pseudomonas aeruginosa (strain LESB58).